The chain runs to 103 residues: Small ribosomal subunit protein uS10 (103 aa).

The protein belongs to the universal ribosomal protein uS10 family. Part of the 30S ribosomal subunit.

Functionally, involved in the binding of tRNA to the ribosomes. The protein is Small ribosomal subunit protein uS10 of Hydrogenovibrio crunogenus (strain DSM 25203 / XCL-2) (Thiomicrospira crunogena).